A 171-amino-acid chain; its full sequence is Putative RING finger protein 027R (171 aa).

Residues 121–163 form an RING-type zinc finger; that stretch reads CAVCMTNPVWVDFVWSCKHISTCIKCLKMLSRGSNGFKCPICR.

The protein belongs to the IIV-6 157L family.

The protein is Putative RING finger protein 027R of Aedes vexans (Inland floodwater mosquito).